The primary structure comprises 161 residues: Nucleotide-binding protein ABO_0048 (161 aa).

The protein belongs to the YajQ family.

Functionally, nucleotide-binding protein. The sequence is that of Nucleotide-binding protein ABO_0048 from Alcanivorax borkumensis (strain ATCC 700651 / DSM 11573 / NCIMB 13689 / SK2).